A 274-amino-acid chain; its full sequence is Endonuclease 8-like L720 (274 aa).

The FPG-type; degenerate zinc-finger motif lies at 241 to 274 (RIYRKSLCPLGHKTIRKKIGLRNRMTTWCPVCQL).

This sequence belongs to the FPG family.

The polypeptide is Endonuclease 8-like L720 (Acanthamoeba polyphaga mimivirus (APMV)).